Reading from the N-terminus, the 790-residue chain is Cadherin-6 (790 aa).

A signal peptide spans 1–18 (MRTYRYFLLLFWVGQPYP). Positions 19 to 53 (TFSNPLSKRTSGFPAKRKALELSANSRNELSRSKR) are excised as a propeptide. 5 consecutive Cadherin domains span residues 54-159 (SWMW…EPIF), 160-268 (TKDV…PPRF), 269-383 (PQST…PPVF), 384-486 (SKLA…DNAP), and 487-608 (EFAE…LIHP). The Extracellular portion of the chain corresponds to 54 to 615 (SWMWNQFFLL…IHPTGLSTGA (562 aa)). A glycan (N-linked (GlcNAc...) asparagine) is linked at asparagine 255. A disordered region spans residues 260 to 291 (DVNDNPPRFPQSTYQFKTPESSPPGTPIGRIK). The segment covering 269–279 (PQSTYQFKTPE) has biased composition (polar residues). Residues asparagine 399, asparagine 437, asparagine 455, and asparagine 536 are each glycosylated (N-linked (GlcNAc...) asparagine). The chain crosses the membrane as a helical span at residues 616–636 (LVAILLCIVILLVTVVLFAAL). Residues 637–790 (RRQRKKEPLI…YGGMDSDKDS (154 aa)) are Cytoplasmic-facing. 2 positions are modified to phosphoserine: serine 786 and serine 790.

Its subcellular location is the cell membrane. Cadherins are calcium-dependent cell adhesion proteins. They preferentially interact with themselves in a homophilic manner in connecting cells; cadherins may thus contribute to the sorting of heterogeneous cell types. The chain is Cadherin-6 (Cdh6) from Mus musculus (Mouse).